The primary structure comprises 302 residues: Haloalkane dehalogenase (302 aa).

The 103-residue stretch at 48–150 (PVLLMHGEPS…AGLVIANTGL (103 aa)) folds into the AB hydrolase-1 domain. Aspartate 123 (nucleophile) is an active-site residue. Aspartate 249 acts as the Proton donor in catalysis. Histidine 278 serves as the catalytic Proton acceptor.

This sequence belongs to the haloalkane dehalogenase family. Type 1 subfamily. Monomer.

The catalysed reaction is 1-haloalkane + H2O = a halide anion + a primary alcohol + H(+). Its function is as follows. Catalyzes hydrolytic cleavage of carbon-halogen bonds in halogenated aliphatic compounds, leading to the formation of the corresponding primary alcohols, halide ions and protons. The sequence is that of Haloalkane dehalogenase from Caulobacter sp. (strain K31).